The following is a 201-amino-acid chain: MTRPFVMGLTGSIGMGKSAVALMLREMGVPVFDADAAVHQLQGPRGPLLPAIEAAFPGTTGPEGVKRQDLGARVFGDADALRRLEAIVHPAVARMREAFMIEHMGEPLVVFDIPLLFEKGHGKDLDAVMVVSAPAEVQRQRVLARPGMTVEKFAHILSLQVPDAEKRARADYVIDTGLTLAETEGQVAELVRAIREKNPRG.

Residues 6–201 (VMGLTGSIGM…RAIREKNPRG (196 aa)) enclose the DPCK domain. 14–19 (GMGKSA) serves as a coordination point for ATP.

It belongs to the CoaE family.

The protein localises to the cytoplasm. It catalyses the reaction 3'-dephospho-CoA + ATP = ADP + CoA + H(+). Its pathway is cofactor biosynthesis; coenzyme A biosynthesis; CoA from (R)-pantothenate: step 5/5. Catalyzes the phosphorylation of the 3'-hydroxyl group of dephosphocoenzyme A to form coenzyme A. This chain is Dephospho-CoA kinase, found in Novosphingobium aromaticivorans (strain ATCC 700278 / DSM 12444 / CCUG 56034 / CIP 105152 / NBRC 16084 / F199).